A 542-amino-acid polypeptide reads, in one-letter code: MSIEIEAELQTAVDKRRNFAIISHPDAGKTTLTEKLLLYGGAIQEAGAVKAKRAQRHATSDWMAMEQQRGISITSTVLQFDYQNCQINLLDTPGHQDFSEDTYRTLAAADNAVMLEDSAKGLEPQTRKLFEVCKMRKLPIFTFINKMDRPGREPLELLDEIEQELGLKTYPVNWPIGMGDRFKGVFDRRKEQIHLFERSIHGRKAAVNTVVNLGDPQIEKLLDQDLYYQLKEDLELLDELGSALDLEQIHTGEMTPVFFGSAMTNFGVQLFLDAFLEYALKPGIHKSTVGEVSPTYPNFTGFVFKLQANMDPKHRDRVAFIRVCTGKFEKDMTVSHARTGKTVRLSRPQKLFAQDRASIENAYPGDIIGLNNPGVFAIGDTIYNGKKIEYEGIPCFSPEIFAYLRNPNPSKFKQFRKGVNELREEGAVQIMYSADEAKRDPILAAVGQLQLEVVQFRMQNEYGVETRVEMLPFTVARWVDGGWEILQKVGRLFNTVAVKDSWGRPVLLFKNQWNCQQVESEHPELKLNNTAPVVSGQEPESL.

A tr-type G domain is found at 14–283 (DKRRNFAIIS…AFLEYALKPG (270 aa)). GTP is bound by residues 23 to 30 (SHPDAGKT), 91 to 95 (DTPGH), and 145 to 148 (NKMD).

This sequence belongs to the TRAFAC class translation factor GTPase superfamily. Classic translation factor GTPase family. PrfC subfamily.

It is found in the cytoplasm. In terms of biological role, increases the formation of ribosomal termination complexes and stimulates activities of RF-1 and RF-2. It binds guanine nucleotides and has strong preference for UGA stop codons. It may interact directly with the ribosome. The stimulation of RF-1 and RF-2 is significantly reduced by GTP and GDP, but not by GMP. This chain is Peptide chain release factor 3, found in Trichodesmium erythraeum (strain IMS101).